The primary structure comprises 935 residues: UvrABC system protein A (935 aa).

31–38 is a binding site for ATP; sequence GLSGSGKS. The segment at 254 to 281 adopts a C4-type zinc-finger fold; sequence CFKCKMSFEELEPLSFSFNSPKGACESC. ABC transporter domains are found at residues 310–579 and 599–931; these read IFGY…NNHS and KEKH…KFLA. Residue 631–638 coordinates ATP; that stretch reads GVSGSGKS. Residues 731 to 757 form a C4-type zinc finger; sequence CEKCQGDGDIKIEMHFLPDVLVQCDSC.

This sequence belongs to the ABC transporter superfamily. UvrA family. In terms of assembly, forms a heterotetramer with UvrB during the search for lesions.

It is found in the cytoplasm. The UvrABC repair system catalyzes the recognition and processing of DNA lesions. UvrA is an ATPase and a DNA-binding protein. A damage recognition complex composed of 2 UvrA and 2 UvrB subunits scans DNA for abnormalities. When the presence of a lesion has been verified by UvrB, the UvrA molecules dissociate. The sequence is that of UvrABC system protein A from Helicobacter pylori (strain ATCC 700392 / 26695) (Campylobacter pylori).